Here is a 66-residue protein sequence, read N- to C-terminus: Large ribosomal subunit protein bL35 (66 aa).

Basic residues-rich tracts occupy residues 1–16 (MPKF…RFKK) and 23–45 (KRGH…RQLR). Positions 1-66 (MPKFKTHRAS…RIRQMLSQMK (66 aa)) are disordered.

The protein belongs to the bacterial ribosomal protein bL35 family.

The sequence is that of Large ribosomal subunit protein bL35 from Lacticaseibacillus casei (strain BL23) (Lactobacillus casei).